Reading from the N-terminus, the 548-residue chain is CTP synthase (548 aa).

The interval methionine 1 to cysteine 270 is amidoligase domain. Position 17 (serine 17) interacts with CTP. Position 17 (serine 17) interacts with UTP. ATP-binding positions include serine 18–leucine 23 and aspartate 75. Residues aspartate 75 and glutamate 143 each contribute to the Mg(2+) site. CTP contacts are provided by residues aspartate 150 to glutamate 152, lysine 190 to glutamine 195, and lysine 227. Residues lysine 190 to glutamine 195 and lysine 227 each bind UTP. Residues tyrosine 305–serine 548 form the Glutamine amidotransferase type-1 domain. Glycine 356 contacts L-glutamine. Cysteine 383 functions as the Nucleophile; for glutamine hydrolysis in the catalytic mechanism. L-glutamine is bound by residues phenylalanine 384–glutamine 387, glutamate 407, and arginine 475. Catalysis depends on residues histidine 521 and glutamate 523.

The protein belongs to the CTP synthase family. As to quaternary structure, homotetramer.

It carries out the reaction UTP + L-glutamine + ATP + H2O = CTP + L-glutamate + ADP + phosphate + 2 H(+). The catalysed reaction is L-glutamine + H2O = L-glutamate + NH4(+). It catalyses the reaction UTP + NH4(+) + ATP = CTP + ADP + phosphate + 2 H(+). It functions in the pathway pyrimidine metabolism; CTP biosynthesis via de novo pathway; CTP from UDP: step 2/2. Allosterically activated by GTP, when glutamine is the substrate; GTP has no effect on the reaction when ammonia is the substrate. The allosteric effector GTP functions by stabilizing the protein conformation that binds the tetrahedral intermediate(s) formed during glutamine hydrolysis. Inhibited by the product CTP, via allosteric rather than competitive inhibition. Functionally, catalyzes the ATP-dependent amination of UTP to CTP with either L-glutamine or ammonia as the source of nitrogen. Regulates intracellular CTP levels through interactions with the four ribonucleotide triphosphates. The chain is CTP synthase from Neorickettsia sennetsu (strain ATCC VR-367 / Miyayama) (Ehrlichia sennetsu).